We begin with the raw amino-acid sequence, 195 residues long: Probable nicotinate-nucleotide adenylyltransferase (195 aa).

This sequence belongs to the NadD family.

It carries out the reaction nicotinate beta-D-ribonucleotide + ATP + H(+) = deamido-NAD(+) + diphosphate. It participates in cofactor biosynthesis; NAD(+) biosynthesis; deamido-NAD(+) from nicotinate D-ribonucleotide: step 1/1. Catalyzes the reversible adenylation of nicotinate mononucleotide (NaMN) to nicotinic acid adenine dinucleotide (NaAD). The protein is Probable nicotinate-nucleotide adenylyltransferase of Mesorhizobium japonicum (strain LMG 29417 / CECT 9101 / MAFF 303099) (Mesorhizobium loti (strain MAFF 303099)).